The sequence spans 147 residues: Hemoglobin subunit beta-2 (147 aa).

An N-acetylvaline modification is found at Val-2. A Globin domain is found at 3–147 (HLTDAEKATV…VASALAHKYH (145 aa)). Position 13 is a phosphoserine (Ser-13). Residue Lys-18 is modified to N6-succinyllysine. Phosphoserine occurs at positions 51 and 53. Heme b-binding residues include His-64 and His-93. Arg-105 carries the asymmetric dimethylarginine modification. Position 124 is a phosphothreonine (Thr-124). Position 126 is a phosphoserine; in variant Ser-126 (Cys-126).

This sequence belongs to the globin family. In terms of assembly, heterotetramer of two alpha chains and two beta chains. Red blood cells.

Involved in oxygen transport from the lung to the various peripheral tissues. This chain is Hemoglobin subunit beta-2, found in Rattus norvegicus (Rat).